We begin with the raw amino-acid sequence, 356 residues long: S-adenosylmethionine:tRNA ribosyltransferase-isomerase (356 aa).

The protein belongs to the QueA family. In terms of assembly, monomer.

Its subcellular location is the cytoplasm. The catalysed reaction is 7-aminomethyl-7-carbaguanosine(34) in tRNA + S-adenosyl-L-methionine = epoxyqueuosine(34) in tRNA + adenine + L-methionine + 2 H(+). The protein operates within tRNA modification; tRNA-queuosine biosynthesis. Functionally, transfers and isomerizes the ribose moiety from AdoMet to the 7-aminomethyl group of 7-deazaguanine (preQ1-tRNA) to give epoxyqueuosine (oQ-tRNA). The protein is S-adenosylmethionine:tRNA ribosyltransferase-isomerase of Escherichia coli O81 (strain ED1a).